A 509-amino-acid polypeptide reads, in one-letter code: Bifunctional purine biosynthesis protein PurH (509 aa).

The region spanning 1 to 145 (MIKRALISVF…KSFKDVVVIS (145 aa)) is the MGS-like domain.

It belongs to the PurH family.

It carries out the reaction (6R)-10-formyltetrahydrofolate + 5-amino-1-(5-phospho-beta-D-ribosyl)imidazole-4-carboxamide = 5-formamido-1-(5-phospho-D-ribosyl)imidazole-4-carboxamide + (6S)-5,6,7,8-tetrahydrofolate. The catalysed reaction is IMP + H2O = 5-formamido-1-(5-phospho-D-ribosyl)imidazole-4-carboxamide. Its pathway is purine metabolism; IMP biosynthesis via de novo pathway; 5-formamido-1-(5-phospho-D-ribosyl)imidazole-4-carboxamide from 5-amino-1-(5-phospho-D-ribosyl)imidazole-4-carboxamide (10-formyl THF route): step 1/1. The protein operates within purine metabolism; IMP biosynthesis via de novo pathway; IMP from 5-formamido-1-(5-phospho-D-ribosyl)imidazole-4-carboxamide: step 1/1. The chain is Bifunctional purine biosynthesis protein PurH from Brachyspira hyodysenteriae (strain ATCC 49526 / WA1).